Consider the following 175-residue polypeptide: MLTSGNILLAGSLLSPEPGLIFWTTITFVLVLIILKKIAWGPIISALEEREKGIQSSIDRAHGAKEESEAILRQNRELLAKADAEADRVIREGREYAEKIRAEITEKAHQESQKMISAAKEEIEQEKRRALAELRNEVADLAVRGAEKIIRGVLDADVQKKVVDSMIQDLSTNRN.

A helical transmembrane segment spans residues leucine 20–tryptophan 40.

This sequence belongs to the ATPase B chain family. As to quaternary structure, F-type ATPases have 2 components, F(1) - the catalytic core - and F(0) - the membrane proton channel. F(1) has five subunits: alpha(3), beta(3), gamma(1), delta(1), epsilon(1). F(0) has four main subunits: a(1), b(2) and c(10-14). The alpha and beta chains form an alternating ring which encloses part of the gamma chain. F(1) is attached to F(0) by a central stalk formed by the gamma and epsilon chains, while a peripheral stalk is formed by the delta and b chains.

It localises to the cell inner membrane. Its function is as follows. F(1)F(0) ATP synthase produces ATP from ADP in the presence of a proton or sodium gradient. F-type ATPases consist of two structural domains, F(1) containing the extramembraneous catalytic core and F(0) containing the membrane proton channel, linked together by a central stalk and a peripheral stalk. During catalysis, ATP synthesis in the catalytic domain of F(1) is coupled via a rotary mechanism of the central stalk subunits to proton translocation. Component of the F(0) channel, it forms part of the peripheral stalk, linking F(1) to F(0). The chain is ATP synthase subunit b 2 from Chlorobium luteolum (strain DSM 273 / BCRC 81028 / 2530) (Pelodictyon luteolum).